A 163-amino-acid chain; its full sequence is Ribonuclease P protein component 4 (163 aa).

Zn(2+) contacts are provided by C66, C69, C96, and C99. A disordered region spans residues 110-163; it reads GPRGGAPISPPAAEYGSGGRDSGEREDKGPQGPPRQGGRDNRQGGGHQGGPKGD. Residues 152–163 show a composition bias toward gly residues; sequence QGGGHQGGPKGD.

It belongs to the eukaryotic/archaeal RNase P protein component 4 family. As to quaternary structure, consists of a catalytic RNA component and at least 4-5 protein subunits. Zn(2+) serves as cofactor.

The protein localises to the cytoplasm. The enzyme catalyses Endonucleolytic cleavage of RNA, removing 5'-extranucleotides from tRNA precursor.. Functionally, part of ribonuclease P, a protein complex that generates mature tRNA molecules by cleaving their 5'-ends. The protein is Ribonuclease P protein component 4 of Aeropyrum pernix (strain ATCC 700893 / DSM 11879 / JCM 9820 / NBRC 100138 / K1).